The following is a 615-amino-acid chain: uncharacterized protein (615 aa).

Composition is skewed to polar residues over residues 1–11, 41–55, and 128–140; these read MSETSSNSPAS, LSQN…SSKV, and TSGS…NAPP. 2 disordered regions span residues 1-61 and 97-149; these read MSET…QALV and HQNH…KASS. Phosphoserine is present on residues Ser-149 and Ser-152. A disordered region spans residues 181–217; the sequence is LIHPEQTDRGLPYAPDEKFHNSGSLKLPKGASLEDLS. 2 positions are modified to phosphoserine: Ser-219 and Ser-275. 3 disordered regions span residues 266–481, 493–565, and 586–615; these read KPLA…KFTG, RLQK…KPSF, and GVET…TEEQ. The segment covering 272–283 has biased composition (polar residues); the sequence is RQRSTADLTESD. Phosphothreonine occurs at positions 276 and 297. The span at 312–323 shows a compositional bias: basic and acidic residues; sequence EAEKGFYTKDGE. A compositionally biased stretch (low complexity) spans 356 to 376; that stretch reads PSLSSASQPSAASSSSSSEPS. Residues 505–522 show a composition bias toward polar residues; sequence PNKSKSPSGTKSPASGET. Residue Thr-514 is modified to Phosphothreonine. Ser-516 is subject to Phosphoserine. The span at 586–599 shows a compositional bias: basic and acidic residues; the sequence is GVETRKEVEPKEEA. Acidic residues predominate over residues 600–615; the sequence is VIPEEDVEVEVETEEQ.

This is an uncharacterized protein from Schizosaccharomyces pombe (strain 972 / ATCC 24843) (Fission yeast).